The following is a 706-amino-acid chain: MWKLTRRLQPHINSTRWLVRNFRNGGAGDATGLYGFDHLKTAKGFQRFVADAIERSGELVSYISGMPSSPEIIKAMDEISDTVCCVVDSAELCRQTHPDREFVEEANKAAIEMNDYLHHLNTNHTLYAAVKKAEQDSNLLTKEASRTAHHLRMDFERGGIHLDPEKLDKVNNLTTNIFQLCREFSENIADDPGHVDIFPGSRIPRHLHHLLNPTYRSTSGGSRGSTRSAHKSKQKGFRINTDPRTVSSILQWTSDEEVRKMVYIQGNSVPHANHGVLEKLIAARHELSQMMGCNSYADIMVEPNLAKSPKVVTSFLQELSKTVKPKADEEFIAIRDFKREKCGNPSAELEPWDETYYTSMMKSSINDVDTAVVASYFPLPQCIEGLKVLVESLFGATFHTIPLAPGESWHPNVVKLSLHHPDEGDLGYLYLDLYSRKGKYPGCASFAIRGGRKISETEYQLPVIALVCNFSRACDSSIVKLNHSEVEVLFHEFGHALHSLLSRTDYQHFSGTRVALDLAEMPSNLFEYYAWDYRLLKRFARHYSTGETIPEKLVNSLQGARNMFAATEMQRQVFYALIDQMLFGEQPETARDVSHLVAELKRQHTSWNHVEGTHWYIRFSHLLNYGAGYYSYLYAKCFASTIWQSICEEDPLSLNTGTLLREKFFKHGGAKDPAELLTDLAGKEIISVHGEGIVPATTYLLNELRL.

Residues 1-29 (MWKLTRRLQPHINSTRWLVRNFRNGGAGD) constitute a mitochondrion transit peptide. The interval 212–238 (NPTYRSTSGGSRGSTRSAHKSKQKGFR) is disordered. The span at 214–227 (TYRSTSGGSRGSTR) shows a compositional bias: low complexity. H491 serves as a coordination point for Zn(2+). E492 is an active-site residue. Residues H495 and E520 each contribute to the Zn(2+) site.

It belongs to the peptidase M3 family. Zn(2+) serves as cofactor.

The protein resides in the mitochondrion. Functionally, aminopeptidase which cleaves preproteins, imported into the mitochondrion, to their mature size. Could cleave both preproteins and preprotein intermediates already cleaved by the mitochondrial processing peptidase (MPP). This is Mitochondrial intermediate peptidase, mitochondrial from Arabidopsis thaliana (Mouse-ear cress).